A 237-amino-acid polypeptide reads, in one-letter code: Class B acid phosphatase (237 aa).

The signal sequence occupies residues 1–25; it reads MRKLTLAFAAASLLFTLNSAVVARA. Asp-69 serves as the catalytic Nucleophile. Residues Asp-69 and Asp-71 each contribute to the Mg(2+) site. Asp-71 functions as the Proton donor in the catalytic mechanism. Substrate contacts are provided by residues 137–138 and Lys-177; that span reads TG. Asp-192 is a binding site for Mg(2+).

Belongs to the class B bacterial acid phosphatase family. As to quaternary structure, homotetramer. Requires Mg(2+) as cofactor.

It localises to the periplasm. It carries out the reaction a phosphate monoester + H2O = an alcohol + phosphate. In terms of biological role, dephosphorylates several organic phosphate monoesters. Also has a phosphotransferase activity catalyzing the transfer of low-energy phosphate groups from organic phosphate monoesters to free hydroxyl groups of various organic compounds. This Klebsiella pneumoniae (strain 342) protein is Class B acid phosphatase.